Here is a 513-residue protein sequence, read N- to C-terminus: MTKKAIISVYNKDGILEFAKELKNLGYEIISTGGTMKYLKENRIDVINISDVTNFPEILDGRVKTLHPNIHAGILAIKDNEEHVKTLNDLNISTIDMVVVNLYPFKETIFRENVAFEDVIENIDIGGPTMLRAAAKNFKYITVIIDPADYGLVLKEIKENGDVSFETRFYLATKVFEYTAYYDSMIFNYFKYIRGDKSFPDYLTVPLETVQKLRYGENPHQQASFYKITLPFIEKSNIANAEQLHGKDLSYNNILDSDSAIELLKEFDEPTCVAIKHNNPCGVASGDNIFEAYKKVYNSDPVSIFGGIVAFNRKVDRQTAEELKKIFLEIVIAPDFDEDALSLLSTKKDLRILKLLTLDKTDVYYDVKSVNGGMLVQEKDRKLLNEDYQVVTERRPTEKEIEDLIFAWKVVKHVKSNAIVIAKDKMTLGIGMGQTNRIWAVEHAISRSRFDLNGAVLASDAFFPFSDSVEAAGKAGITAIIQPGGSIRDKESIDAANKYNIAMIFTGIRHFRH.

The 145-residue stretch at 1–145 (MTKKAIISVY…KNFKYITVII (145 aa)) folds into the MGS-like domain.

Belongs to the PurH family.

The enzyme catalyses (6R)-10-formyltetrahydrofolate + 5-amino-1-(5-phospho-beta-D-ribosyl)imidazole-4-carboxamide = 5-formamido-1-(5-phospho-D-ribosyl)imidazole-4-carboxamide + (6S)-5,6,7,8-tetrahydrofolate. It carries out the reaction IMP + H2O = 5-formamido-1-(5-phospho-D-ribosyl)imidazole-4-carboxamide. It participates in purine metabolism; IMP biosynthesis via de novo pathway; 5-formamido-1-(5-phospho-D-ribosyl)imidazole-4-carboxamide from 5-amino-1-(5-phospho-D-ribosyl)imidazole-4-carboxamide (10-formyl THF route): step 1/1. It functions in the pathway purine metabolism; IMP biosynthesis via de novo pathway; IMP from 5-formamido-1-(5-phospho-D-ribosyl)imidazole-4-carboxamide: step 1/1. This chain is Bifunctional purine biosynthesis protein PurH, found in Caldicellulosiruptor saccharolyticus (strain ATCC 43494 / DSM 8903 / Tp8T 6331).